The following is a 100-amino-acid chain: Sec-independent protein translocase protein TatA (100 aa).

A helical transmembrane segment spans residues 1–21 (MGALRPWHIAVLVVVLILLFG). Residues 46 to 58 (LHDDDRDLAEKAD) show a composition bias toward basic and acidic residues. The disordered stretch occupies residues 46-100 (LHDDDRDLAEKADAQAGYQPMPPQVQQGQHPQQSPYPAPPQQQPVVDPVQRTRDS). Low complexity predominate over residues 69 to 78 (QVQQGQHPQQ).

The protein belongs to the TatA/E family. As to quaternary structure, the Tat system comprises two distinct complexes: a TatABC complex, containing multiple copies of TatA, TatB and TatC subunits, and a separate TatA complex, containing only TatA subunits. Substrates initially bind to the TatABC complex, which probably triggers association of the separate TatA complex to form the active translocon.

The protein localises to the cell membrane. In terms of biological role, part of the twin-arginine translocation (Tat) system that transports large folded proteins containing a characteristic twin-arginine motif in their signal peptide across membranes. TatA could form the protein-conducting channel of the Tat system. The polypeptide is Sec-independent protein translocase protein TatA (Salinispora tropica (strain ATCC BAA-916 / DSM 44818 / JCM 13857 / NBRC 105044 / CNB-440)).